The following is a 503-amino-acid chain: Hexose transporter 1 (503 aa).

The Cytoplasmic segment spans residues 1–26 (MKKSSKEISPSQSLKNGGSDHFFNTS). The chain crosses the membrane as a helical span at residues 27 to 47 (LMYVLAACLASFIFGYQVSVL). Residues 48 to 76 (NTIKNFIVIEFGWCTGNKVECDDSTLKSS) are Extracellular-facing. A disulfide bond links C61 and C68. Residues 77–97 (FLLASVFIGAVVGSGFSDYLV) form a helical membrane-spanning segment. The Cytoplasmic segment spans residues 98–102 (QHGRR). A helical transmembrane segment spans residues 103–123 (FSLLVIYNFFILVSILTSITH). Residues 124–132 (HFHTILFSR) lie on the Extracellular side of the membrane. Residues 133-153 (LLSGFGVGLITVSVPMYISEM) form a helical membrane-spanning segment. Topologically, residues 154 to 163 (THKDKKGAYG) are cytoplasmic. A helical transmembrane segment spans residues 164–184 (VLHQLFITFGILVAVLLGMAM). An alpha-D-glucose-binding site is contributed by Q167. Q167 provides a ligand contact to beta-D-glucose. Over 185–205 (GEAPDAKSVDALGEFQKIWWR) the chain is Extracellular. The helical transmembrane segment at 206-226 (LMFFFPCLISILGIVLLTFFY) threads the bilayer. Residues 227–291 (KEETPYYLFE…RAMQIPSYRN (65 aa)) lie on the Cytoplasmic side of the membrane. Residues 292-312 (VILLGCILSGLQQFTGINVLV) traverse the membrane as a helical segment. The alpha-D-glucose site is built by Q303, Q304, and N309. Q303 is a beta-D-glucose binding site. Residue N309 coordinates beta-D-glucose. The Extracellular segment spans residues 313–329 (SNSNELYKEFLSNKLIT). The chain crosses the membrane as a helical span at residues 330–350 (TLSVIMTVVNFLMTFPAIYIV). A beta-D-glucose-binding site is contributed by N339. At 351-356 (EKLGRK) the chain is on the cytoplasmic side. A helical transmembrane segment spans residues 357-377 (TLLLCGCAGVTLAAFLPTAIA). The Extracellular segment spans residues 378–391 (NQIDRSSDLVRNLS). The chain crosses the membrane as a helical span at residues 392–412 (IAATFVMIISFAVSYGPVLWI). W411 serves as a coordination point for alpha-D-glucose. Over 413–428 (YLHEMFPSEIKDSAAS) the chain is Cytoplasmic. A helical transmembrane segment spans residues 429-449 (LASLVNWVCAIIVVFPSDIII). The Extracellular portion of the chain corresponds to 450 to 454 (KKSPT). A helical membrane pass occupies residues 455-475 (ILFFIFSGMSILSFLFIFFFI). The Cytoplasmic segment spans residues 476-503 (KETKGGEIGTSPYITMEERQKHMGKSAV).

It belongs to the major facilitator superfamily. Sugar transporter (TC 2.A.1.1) family. As to quaternary structure, homodimer.

It is found in the cell membrane. The catalysed reaction is D-glucose(out) = D-glucose(in). The enzyme catalyses D-fructose(out) = D-fructose(in). It carries out the reaction D-galactose(in) = D-galactose(out). It catalyses the reaction D-mannose(out) = D-mannose(in). The catalysed reaction is D-glucosamine(out) = D-glucosamine(in). The enzyme catalyses D-xylose(out) = D-xylose(in). Its activity is regulated as follows. Inhibited by compound 3361 (3-O-((undec-10-en)-1-yl)-D-glucose). Its function is as follows. Sodium-independent facilitative hexose transporter. Can transport D-glucose and D-fructose. Can transport D-mannose, D-galactose, D-xylose and D-glucosamine. In Plasmodium vivax, this protein is Hexose transporter 1.